The chain runs to 520 residues: Probable E3 ubiquitin-protein ligase rbrA (520 aa).

Over residues 1–42 the composition is skewed to acidic residues; that stretch reads MTDDEMYEDYDVDDDSAEESGNESLDDTEYDDAATQEFDFDE. The interval 1-51 is disordered; it reads MTDDEMYEDYDVDDDSAEESGNESLDDTEYDDAATQEFDFDENQPQRSLGK. The segment at 135–354 is TRIAD supradomain; that stretch reads GNVSCLICLE…GGYYNCNKYD (220 aa). Positions 139, 142, 156, 158, 161, 164, 184, 189, 228, 233, 250, 252, 257, 260, 268, 273, 300, and 303 each coordinate Zn(2+). Residues 139-189 form an RING-type 1 zinc finger; that stretch reads CLICLEDYPPTQTFALICNHRYCLPCYKNYLEIKVSEGPECIYTPCPAPKC. The IBR-type zinc-finger motif lies at 208–273; sequence ERFNNFILKS…EIGDHMPCPC (66 aa). The RING-type 2; atypical zinc-finger motif lies at 300–333; sequence CPECRSPIEKNGGCMHMTCRKNAGGCGFEFCWLC. The active site involves Cys-313. The Zn(2+) site is built by Cys-318, Cys-325, Cys-330, Cys-333, His-340, and Cys-350.

This sequence belongs to the RBR family.

It carries out the reaction [E2 ubiquitin-conjugating enzyme]-S-ubiquitinyl-L-cysteine + [acceptor protein]-L-lysine = [E2 ubiquitin-conjugating enzyme]-L-cysteine + [acceptor protein]-N(6)-ubiquitinyl-L-lysine.. Its pathway is protein modification; protein ubiquitination. Might act as an E3 ubiquitin-protein ligase. Appears to be required for normal cell-type proportioning and cell sorting during multicellular development. In addition to being necessary for a normal percentage of prestalk cells and the organization of the slug, rbrA is also necessary for spore cell viability. The chain is Probable E3 ubiquitin-protein ligase rbrA (rbrA) from Dictyostelium discoideum (Social amoeba).